The following is a 95-amino-acid chain: Co-chaperonin GroES (95 aa).

This sequence belongs to the GroES chaperonin family. In terms of assembly, heptamer of 7 subunits arranged in a ring. Interacts with the chaperonin GroEL.

The protein localises to the cytoplasm. In terms of biological role, together with the chaperonin GroEL, plays an essential role in assisting protein folding. The GroEL-GroES system forms a nano-cage that allows encapsulation of the non-native substrate proteins and provides a physical environment optimized to promote and accelerate protein folding. GroES binds to the apical surface of the GroEL ring, thereby capping the opening of the GroEL channel. This is Co-chaperonin GroES from Rhizorhabdus wittichii (strain DSM 6014 / CCUG 31198 / JCM 15750 / NBRC 105917 / EY 4224 / RW1) (Sphingomonas wittichii).